The sequence spans 55 residues: ATP synthase protein 8 (55 aa).

The chain crosses the membrane as a helical span at residues Leu4 to Ile24.

It belongs to the ATPase protein 8 family. F-type ATPases have 2 components, CF(1) - the catalytic core - and CF(0) - the membrane proton channel.

The protein resides in the mitochondrion membrane. Mitochondrial membrane ATP synthase (F(1)F(0) ATP synthase or Complex V) produces ATP from ADP in the presence of a proton gradient across the membrane which is generated by electron transport complexes of the respiratory chain. F-type ATPases consist of two structural domains, F(1) - containing the extramembraneous catalytic core and F(0) - containing the membrane proton channel, linked together by a central stalk and a peripheral stalk. During catalysis, ATP synthesis in the catalytic domain of F(1) is coupled via a rotary mechanism of the central stalk subunits to proton translocation. Part of the complex F(0) domain. Minor subunit located with subunit a in the membrane. This is ATP synthase protein 8 (MT-ATP8) from Petromyzon marinus (Sea lamprey).